The sequence spans 688 residues: Elongation factor G (688 aa).

The tr-type G domain occupies 6 to 280 (KLFRNFGIMA…AVVDFLPSPI (275 aa)). Residues 15–22 (AHIDAGKT), 79–83 (DTPGH), and 133–136 (NKMD) each bind GTP.

This sequence belongs to the TRAFAC class translation factor GTPase superfamily. Classic translation factor GTPase family. EF-G/EF-2 subfamily.

The protein resides in the cytoplasm. In terms of biological role, catalyzes the GTP-dependent ribosomal translocation step during translation elongation. During this step, the ribosome changes from the pre-translocational (PRE) to the post-translocational (POST) state as the newly formed A-site-bound peptidyl-tRNA and P-site-bound deacylated tRNA move to the P and E sites, respectively. Catalyzes the coordinated movement of the two tRNA molecules, the mRNA and conformational changes in the ribosome. This chain is Elongation factor G, found in Ureaplasma urealyticum serovar 10 (strain ATCC 33699 / Western).